A 123-amino-acid polypeptide reads, in one-letter code: Small ribosomal subunit protein uS12 (123 aa).

A disordered region spans residues R9 to P28. Low complexity predominate over residues K18–A27. Residue D89 is modified to 3-methylthioaspartic acid.

Belongs to the universal ribosomal protein uS12 family. Part of the 30S ribosomal subunit. Contacts proteins S8 and S17. May interact with IF1 in the 30S initiation complex.

With S4 and S5 plays an important role in translational accuracy. Functionally, interacts with and stabilizes bases of the 16S rRNA that are involved in tRNA selection in the A site and with the mRNA backbone. Located at the interface of the 30S and 50S subunits, it traverses the body of the 30S subunit contacting proteins on the other side and probably holding the rRNA structure together. The combined cluster of proteins S8, S12 and S17 appears to hold together the shoulder and platform of the 30S subunit. This Desulfosudis oleivorans (strain DSM 6200 / JCM 39069 / Hxd3) (Desulfococcus oleovorans) protein is Small ribosomal subunit protein uS12.